The following is a 271-amino-acid chain: Thiazole synthase (271 aa).

K95 acts as the Schiff-base intermediate with DXP in catalysis. 1-deoxy-D-xylulose 5-phosphate-binding positions include G156, 182–183 (AG), and 204–205 (NT).

Belongs to the ThiG family. Homotetramer. Forms heterodimers with either ThiH or ThiS.

Its subcellular location is the cytoplasm. The catalysed reaction is [ThiS sulfur-carrier protein]-C-terminal-Gly-aminoethanethioate + 2-iminoacetate + 1-deoxy-D-xylulose 5-phosphate = [ThiS sulfur-carrier protein]-C-terminal Gly-Gly + 2-[(2R,5Z)-2-carboxy-4-methylthiazol-5(2H)-ylidene]ethyl phosphate + 2 H2O + H(+). The protein operates within cofactor biosynthesis; thiamine diphosphate biosynthesis. Catalyzes the rearrangement of 1-deoxy-D-xylulose 5-phosphate (DXP) to produce the thiazole phosphate moiety of thiamine. Sulfur is provided by the thiocarboxylate moiety of the carrier protein ThiS. In vitro, sulfur can be provided by H(2)S. The polypeptide is Thiazole synthase (Yersinia pestis).